The chain runs to 203 residues: MSDKFQDRTMAFAGICQAAYLVQKVARDGTCDEASLRESLQSVLVTDPKQPLEVFGNHLAIRDGYRALVEQLGSDGSQKNAELTRYVVSLIALERKLAKRKDILNMLGERISQIGRQQQHFDLLDEQILANMASIYSDLISPIGPRIQIAGTPLFLQQPLVQHKVRALLLAGIRACVLWRQLDGSRTQIIFARKKMVELAKRF.

This sequence belongs to the HflD family.

It is found in the cytoplasm. It localises to the cell inner membrane. This chain is High frequency lysogenization protein HflD homolog, found in Aeromonas salmonicida (strain A449).